The chain runs to 534 residues: Acyl-CoA-binding domain-containing protein 5 (534 aa).

The region spanning 41 to 130 is the ACB domain; it reads HETRFEAAVK…MKKIIETMPM (90 aa). 52-61 contacts an acyl-CoA; sequence IQSLPKNGSF. Proline 63 is modified (phosphothreonine). An acyl-CoA-binding positions include 72–76, lysine 98, and tyrosine 117; that span reads YSFYK. Leucine 137 and glutamate 172 each carry phosphothreonine. The disordered stretch occupies residues 181 to 225; it reads TPNAKTVNGKAESSDSGAESEEEEAQEEVKGAEQSDNDKKMMKKS. Residues 190–219 adopt a coiled-coil conformation; it reads KAESSDSGAESEEEEAQEEVKGAEQSDNDK. Residues serine 193, serine 194, serine 196, serine 200, serine 215, serine 279, and serine 313 each carry the phosphoserine modification. The segment covering 207–225 has biased composition (basic and acidic residues); the sequence is EEVKGAEQSDNDKKMMKKS. Residues 376 to 385 are compositionally biased toward basic and acidic residues; that stretch reads EVKHGGEDGR. Positions 376–442 are disordered; it reads EVKHGGEDGR…ERWGSDRGSR (67 aa). Threonine 400 bears the Phosphothreonine mark. A Phosphoserine modification is found at serine 428. Residues 431–441 are compositionally biased toward basic and acidic residues; it reads DGERWGSDRGS. Residues 447–476 are a coiled coil; it reads EQIALVLMRLQEDMQNVLQRLQKLETLTAL. Lysine 469 is subject to N6-acetyllysine. The helical transmembrane segment at 506–526 threads the bilayer; the sequence is GVLTFAIIWPFIAQWLVYLYY.

The protein belongs to the ATG37 family.

The protein resides in the peroxisome membrane. Functionally, acyl-CoA binding protein which acts as the peroxisome receptor for pexophagy but is dispensable for aggrephagy and nonselective autophagy. Binds medium- and long-chain acyl-CoA esters. This chain is Acyl-CoA-binding domain-containing protein 5 (ACBD5), found in Homo sapiens (Human).